The following is a 259-amino-acid chain: Borneol dehydrogenase, mitochondrial (259 aa).

The transit peptide at 1–30 (MASTVLRRLEGKVALITGAASGIGESAARL) directs the protein to the mitochondrion. NAD(+)-binding positions include 21-23 (SGI), Asp-42, 63-64 (DV), and 90-92 (NAG). The active-site Proton donor is the Ser-144. Substrate-binding residues include Ser-144 and Tyr-157. Residues Tyr-157, Lys-161, and Thr-192 each contribute to the NAD(+) site. The Proton acceptor role is filled by Tyr-157. Lys-161 functions as the Proton donor/acceptor in the catalytic mechanism.

This sequence belongs to the short-chain dehydrogenases/reductases (SDR) family. In terms of tissue distribution, specifically expressed in glandular trichomes of mature flowers.

It is found in the mitochondrion. The enzyme catalyses borneol + NAD(+) = camphor + NADH + H(+). Its pathway is secondary metabolite biosynthesis; terpenoid biosynthesis. Its function is as follows. Involved in the biosynthesis of monoterpenes natural products related to camphor. Catalyzes the conversion of borneol into camphor. This chain is Borneol dehydrogenase, mitochondrial, found in Lavandula x intermedia (Lavandin).